Consider the following 241-residue polypeptide: 3-deoxy-D-manno-octulosonic acid kinase (241 aa).

Aspartate 171 is an active-site residue.

The protein belongs to the protein kinase superfamily. KdkA/RfaP family.

It is found in the cell inner membrane. The catalysed reaction is an alpha-Kdo-(2-&gt;6)-lipid IVA + ATP = a 4-O-phospho-alpha-Kdo-(2-&gt;6)-lipid IVA + ADP + H(+). It functions in the pathway bacterial outer membrane biogenesis; LPS core biosynthesis. In terms of biological role, catalyzes the ATP-dependent phosphorylation of the 3-deoxy-D-manno-octulosonic acid (Kdo) residue in Kdo-lipid IV(A) at the 4-OH position. In Haemophilus influenzae (strain PittEE), this protein is 3-deoxy-D-manno-octulosonic acid kinase.